Consider the following 383-residue polypeptide: Acetylornithine deacetylase (383 aa).

His-80 serves as a coordination point for Zn(2+). The active site involves Asp-82. Asp-112 contributes to the Zn(2+) binding site. Glu-144 is an active-site residue. The Zn(2+) site is built by Glu-145, Glu-169, and His-355.

The protein belongs to the peptidase M20A family. ArgE subfamily. Homodimer. The cofactor is Zn(2+). Co(2+) serves as cofactor. Requires glutathione as cofactor.

Its subcellular location is the cytoplasm. It catalyses the reaction N(2)-acetyl-L-ornithine + H2O = L-ornithine + acetate. Its pathway is amino-acid biosynthesis; L-arginine biosynthesis; L-ornithine from N(2)-acetyl-L-ornithine (linear): step 1/1. In terms of biological role, catalyzes the hydrolysis of the amide bond of N(2)-acetylated L-amino acids. Cleaves the acetyl group from N-acetyl-L-ornithine to form L-ornithine, an intermediate in L-arginine biosynthesis pathway, and a branchpoint in the synthesis of polyamines. In Erwinia tasmaniensis (strain DSM 17950 / CFBP 7177 / CIP 109463 / NCPPB 4357 / Et1/99), this protein is Acetylornithine deacetylase.